The following is a 677-amino-acid chain: DNA ligase (677 aa).

NAD(+) is bound by residues Asp32–Asp36, Ser81–Leu82, and Glu112. The active-site N6-AMP-lysine intermediate is Lys114. NAD(+) is bound by residues Arg135, Glu171, Lys288, and Lys312. Cys416, Cys419, Cys434, and Cys439 together coordinate Zn(2+). In terms of domain architecture, BRCT spans Asn598–Ser677.

The protein belongs to the NAD-dependent DNA ligase family. LigA subfamily. Mg(2+) serves as cofactor. It depends on Mn(2+) as a cofactor.

It carries out the reaction NAD(+) + (deoxyribonucleotide)n-3'-hydroxyl + 5'-phospho-(deoxyribonucleotide)m = (deoxyribonucleotide)n+m + AMP + beta-nicotinamide D-nucleotide.. Functionally, DNA ligase that catalyzes the formation of phosphodiester linkages between 5'-phosphoryl and 3'-hydroxyl groups in double-stranded DNA using NAD as a coenzyme and as the energy source for the reaction. It is essential for DNA replication and repair of damaged DNA. The sequence is that of DNA ligase from Dehalococcoides mccartyi (strain CBDB1).